Reading from the N-terminus, the 357-residue chain is Peptide chain release factor 1 (357 aa).

Q232 is subject to N5-methylglutamine.

This sequence belongs to the prokaryotic/mitochondrial release factor family. Methylated by PrmC. Methylation increases the termination efficiency of RF1.

It is found in the cytoplasm. In terms of biological role, peptide chain release factor 1 directs the termination of translation in response to the peptide chain termination codons UAG and UAA. The polypeptide is Peptide chain release factor 1 (Oleidesulfovibrio alaskensis (strain ATCC BAA-1058 / DSM 17464 / G20) (Desulfovibrio alaskensis)).